The following is a 153-amino-acid chain: 4'-phosphopantetheinyl transferase B, mitochondrial (153 aa).

It belongs to the P-Pant transferase superfamily.

The protein resides in the mitochondrion. It catalyses the reaction apo-[ACP] + CoA = holo-[ACP] + adenosine 3',5'-bisphosphate + H(+). Acyl-carrier-protein synthase transfers the 4'-phosphopantetheine moiety from coenzyme A to a Ser of an acyl-carrier-protein. The 4'-phosphopantetheine (4'-PPT) portion of CoA provides the essential prosthetic group for a number of carrier proteins and multi-domain enzymes, priming them for the acceptance of acyl building blocks in fatty acid synthesis and many aspects of secondary metabolism mediated by polyketide synthases (PKSs) and non-ribosomal peptide synthetases (NRPSs). PptB is specific for the mitochondrial acyl carrier protein acpA. This chain is 4'-phosphopantetheinyl transferase B, mitochondrial, found in Aspergillus fumigatus (strain ATCC MYA-4609 / CBS 101355 / FGSC A1100 / Af293) (Neosartorya fumigata).